We begin with the raw amino-acid sequence, 187 residues long: UPF0301 protein YPTS_3341 (187 aa).

The protein belongs to the UPF0301 (AlgH) family.

The protein is UPF0301 protein YPTS_3341 of Yersinia pseudotuberculosis serotype IB (strain PB1/+).